The chain runs to 189 residues: UPF0312 protein VV2_0231 (189 aa).

Positions 1–22 (MRKSVIATGLALMMAVPFAANA) are cleaved as a signal peptide.

The protein belongs to the UPF0312 family. Type 1 subfamily.

The protein localises to the periplasm. The polypeptide is UPF0312 protein VV2_0231 (Vibrio vulnificus (strain CMCP6)).